The primary structure comprises 224 residues: N-terminal Xaa-Pro-Lys N-methyltransferase 1 (224 aa).

Residues Gly-70, Arg-75, 92–94, 120–121, and Gln-136 each bind S-adenosyl-L-methionine; these read DVT and LQ.

Belongs to the methyltransferase superfamily. NTM1 family.

It is found in the nucleus. The enzyme catalyses N-terminal L-alanyl-L-prolyl-L-lysyl-[protein] + 3 S-adenosyl-L-methionine = N-terminal N,N,N-trimethyl-L-alanyl-L-prolyl-L-lysyl-[protein] + 3 S-adenosyl-L-homocysteine + 3 H(+). It carries out the reaction N-terminal L-seryl-L-prolyl-L-lysyl-[protein] + 3 S-adenosyl-L-methionine = N-terminal N,N,N-trimethyl-L-seryl-L-prolyl-L-lysyl-[protein] + 3 S-adenosyl-L-homocysteine + 3 H(+). It catalyses the reaction N-terminal L-prolyl-L-prolyl-L-lysyl-[protein] + 2 S-adenosyl-L-methionine = N-terminal N,N-dimethyl-L-prolyl-L-prolyl-L-lysyl-[protein] + 2 S-adenosyl-L-homocysteine + 2 H(+). Its function is as follows. Distributive alpha-N-methyltransferase that methylates the N-terminus of target proteins containing the N-terminal motif [Ala/Gly/Pro/Ser]-Pro-Lys when the initiator Met is cleaved. Specifically catalyzes mono-, di- or tri-methylation of the exposed alpha-amino group of the Ala, Gly or Ser residue in the [Ala/Gly/Ser]-Pro-Lys motif and mono- or di-methylation of Pro in the Pro-Pro-Lys motif. Required during mitosis for normal bipolar spindle formation and chromosome segregation via its action on target proteins. This Xenopus tropicalis (Western clawed frog) protein is N-terminal Xaa-Pro-Lys N-methyltransferase 1 (ntmt1).